The chain runs to 483 residues: Altronate oxidoreductase (483 aa).

Residue 18-29 coordinates NAD(+); that stretch reads IIQFGEGNFLRA.

It belongs to the mannitol dehydrogenase family. UxaB subfamily.

The catalysed reaction is D-altronate + NAD(+) = keto-D-tagaturonate + NADH + H(+). It functions in the pathway carbohydrate metabolism; pentose and glucuronate interconversion. This chain is Altronate oxidoreductase, found in Escherichia coli O1:K1 / APEC.